A 92-amino-acid polypeptide reads, in one-letter code: Small ribosomal subunit protein uS19 (92 aa).

This sequence belongs to the universal ribosomal protein uS19 family.

Protein S19 forms a complex with S13 that binds strongly to the 16S ribosomal RNA. This Staphylococcus aureus (strain Mu3 / ATCC 700698) protein is Small ribosomal subunit protein uS19.